A 503-amino-acid polypeptide reads, in one-letter code: MNVFFMFSLLFLAALGSCADDGNPLEECFRETDYEEFLEIAKNGLSATSNPKHVVIVGAGMSGLSAAYVLANAGHQVTVLEASKRAGGRVRTYRNDKEGWYANLGPMRLPEKHRIVREYIRKFGLQLNEFSQENENAWYFIKNIRKRVGEVNKDPGVLEYPVKPSEVGKSAGQLYEESLQKAVEELRRTNCSYMLNKYDTYSTKEYLLKEGNLSPGAVDMIGDLLNEDSGYYVSFIESLKHDDIFAYEKRFDEIVGGMDKLPTSMYQAIQEKVRLNVRVIKIQQDVKEVTVTYQTSAKETLSVTADYVIVCTTSRAARRIKFEPPLPPKKAHALRSVHYRSGTKIFLTCTKKFWEDDGIHGGKSTTDLPSRFIYYPNHNFPSGVGVIIAYGIGDDANFFQALDFKDCGDIVINDLSLIHQLPKEEIQAFCRPSMIQRWSLDKYAMGGITTFTPYQFQHFSEALTAPVDRIYFAGEYTAQAHGWIDSTIKSGLTAARDVNRASE.

An N-terminal signal peptide occupies residues 1-18 (MNVFFMFSLLFLAALGSC). A disulfide bridge connects residues C28 and C191. Residues 61–62 (MS), 81–82 (EA), R89, and 105–108 (GPMR) each bind FAD. R108 serves as a coordination point for substrate. N-linked (GlcNAc...) asparagine glycosylation is present at N190. H241 is a binding site for substrate. V279 provides a ligand contact to FAD. A disulfide bridge links C349 with C430. Residue Y390 participates in substrate binding. FAD is bound by residues E475 and 482–487 (GWIDST). 482–483 (GW) serves as a coordination point for substrate.

It belongs to the flavin monoamine oxidase family. FIG1 subfamily. Homodimer; non-covalently linked. The cofactor is FAD. In terms of processing, N-glycosylated. The enzymatic activity is not affected by deglycosylation. As to expression, expressed by the venom gland.

The protein resides in the secreted. The catalysed reaction is an L-alpha-amino acid + O2 + H2O = a 2-oxocarboxylate + H2O2 + NH4(+). It carries out the reaction L-leucine + O2 + H2O = 4-methyl-2-oxopentanoate + H2O2 + NH4(+). The enzyme catalyses L-phenylalanine + O2 + H2O = 3-phenylpyruvate + H2O2 + NH4(+). It catalyses the reaction L-methionine + O2 + H2O = 4-methylsulfanyl-2-oxobutanoate + H2O2 + NH4(+). The catalysed reaction is L-isoleucine + O2 + H2O = (S)-3-methyl-2-oxopentanoate + H2O2 + NH4(+). Catalyzes an oxidative deamination of predominantly hydrophobic and aromatic L-amino acids, thus producing hydrogen peroxide that may contribute to the diverse toxic effects of this enzyme. Is highly active on L-Met, L-Leu, L-Phe and L-Ile. Exhibits diverse biological activities, such as antibacterial on both Gram-positive and Gram-negative bacteria and antiparasitic activities, as well as induction of platelet aggregation. Effects of snake L-amino oxidases on platelets are controversial, since they either induce aggregation or inhibit agonist-induced aggregation. These different effects are probably due to different experimental conditions. This protein may also have activities in hemorrhage, hemolysis, edema, and apoptosis. The protein is L-amino-acid oxidase of Bothrops pauloensis (Neuwied's lancehead).